Consider the following 285-residue polypeptide: MSDAAEEQPMETTGATENGHEAAPEGEAPVEPSAAAAAPAASAGSGGGTTTAPSGNQNGAEGDQINASKNEEDAGKMFVGGLSWDTSKKDLKDYFTKFGEVVDCTIKMDPNTGRSRGFGFILFKDSSSVEKVLDQKEHRLDGRVIDPKKAMAMKKDPVKKIFVGGLNPEATEEKIREYFGQFGEIEAIELPIDPKLNKRRGFVFITFKEEDPVKKVLEKKFHTVSGSKCEIKVAQPKEVYQQQQYGSGGRGNRNRGNRGSGGGQGSTNYGKSQRRGGHQNNYKPY.

Residues 1 to 65 are disordered; sequence MSDAAEEQPM…NQNGAEGDQI (65 aa). Low complexity predominate over residues 25–43; sequence EGEAPVEPSAAAAAPAASA. RRM domains are found at residues 75–158 and 159–238; these read GKMF…KDPV and KKIF…QPKE. A Phosphoserine modification is found at Ser-87. Glycyl lysine isopeptide (Lys-Gly) (interchain with G-Cter in SUMO2) cross-links involve residues Lys-136 and Lys-208. The residue at position 220 (Lys-220) is an N6-acetyllysine. A disordered region spans residues 239–285; it reads VYQQQQYGSGGRGNRNRGNRGSGGGQGSTNYGKSQRRGGHQNNYKPY. Ser-247 bears the Phosphoserine mark. At Arg-250 the chain carries Dimethylated arginine; alternate. Arg-250 carries the post-translational modification Omega-N-methylarginine; alternate. An omega-N-methylarginine mark is found at Arg-255 and Arg-258. Lys-271 is subject to N6-acetyllysine. Arg-275 carries the post-translational modification Dimethylated arginine; alternate. Arg-275 is subject to Omega-N-methylarginine; alternate. Position 275 is an asymmetric dimethylarginine; alternate (Arg-275).

As to quaternary structure, identified in a IGF2BP1-dependent mRNP granule complex containing untranslated mRNAs. Interacts with APOBEC1. In terms of tissue distribution, ubiquitous.

It localises to the nucleus. The protein localises to the cytoplasm. Transcriptional repressor. Binds to CArG box motifs, single-stranded and double-stranded DNA, and RNA. It may be that repression by CBF-A is a result of competitive binding of CBF, a putative positive factor, and CBF-A to the same or overlapping motifs around the CArG boxes. The chain is Heterogeneous nuclear ribonucleoprotein A/B (Hnrnpab) from Mus musculus (Mouse).